The sequence spans 449 residues: GTPase Der (449 aa).

EngA-type G domains are found at residues 4-169 (PIVA…PAGE) and 177-353 (IQVA…EQHR). Residues 10–17 (GRPNVGKS), 57–61 (DTGGL), 120–123 (NKCE), 183–190 (GRPNVGKS), 230–234 (DTAGI), and 295–298 (NKWD) each bind GTP. Residues 354–439 (RRVTTAVVND…PIRLLWRSKK (86 aa)) enclose the KH-like domain.

This sequence belongs to the TRAFAC class TrmE-Era-EngA-EngB-Septin-like GTPase superfamily. EngA (Der) GTPase family. Associates with the 50S ribosomal subunit.

Functionally, GTPase that plays an essential role in the late steps of ribosome biogenesis. In Thermosynechococcus vestitus (strain NIES-2133 / IAM M-273 / BP-1), this protein is GTPase Der.